A 125-amino-acid polypeptide reads, in one-letter code: Small ribosomal subunit protein uS12 (125 aa).

Positions 1–28 are disordered; it reads MPTISQLIGSERKRLTRKTKSPALKSCP. A 3-methylthioaspartic acid modification is found at aspartate 89. Residues 104-125 form a disordered region; that stretch reads TAGVKDRRQSRSKYGAKAPKNN.

It belongs to the universal ribosomal protein uS12 family. As to quaternary structure, part of the 30S ribosomal subunit. Contacts proteins S8 and S17. May interact with IF1 in the 30S initiation complex.

In terms of biological role, with S4 and S5 plays an important role in translational accuracy. Functionally, interacts with and stabilizes bases of the 16S rRNA that are involved in tRNA selection in the A site and with the mRNA backbone. Located at the interface of the 30S and 50S subunits, it traverses the body of the 30S subunit contacting proteins on the other side and probably holding the rRNA structure together. The combined cluster of proteins S8, S12 and S17 appears to hold together the shoulder and platform of the 30S subunit. The polypeptide is Small ribosomal subunit protein uS12 (Prochlorococcus marinus (strain MIT 9515)).